Consider the following 709-residue polypeptide: ATP-dependent RNA helicase dbp7 (709 aa).

The interval 13-90 (DNAQSRKPEA…KPAHELKGNK (78 aa)) is disordered. Over residues 16 to 34 (QSRKPEALKSSRRWTDRAR) the composition is skewed to basic and acidic residues. Over residues 44–65 (NESSKSTVKRNSGTNGASTDYK) the composition is skewed to polar residues. Basic and acidic residues predominate over residues 66-90 (NSQKEKVINPVFDPRKPAHELKGNK). The Q motif motif lies at 138 to 167 (TNFAGVQLDTQLADHLNNKMNISAPTAIQS). Residues 172–366 (ALLNTDDKDA…DSALKDALYL (195 aa)) form the Helicase ATP-binding domain. 185-192 (AQTGSGKT) lines the ATP pocket. The DEAD box signature appears at 301-304 (DEGD). Positions 404-580 (LLRSHVRSYK…EQPNGPSGLL (177 aa)) constitute a Helicase C-terminal domain. Positions 662–690 (GKISGANSSKPRKQGGSVDKGKSKSSKDI) are disordered.

It belongs to the DEAD box helicase family. DDX31/DBP7 subfamily.

It localises to the nucleus. The protein localises to the nucleolus. The catalysed reaction is ATP + H2O = ADP + phosphate + H(+). Functionally, ATP-binding RNA helicase involved in the biogenesis of 60S ribosomal subunits and is required for the normal formation of 25S and 5.8S rRNAs. The chain is ATP-dependent RNA helicase dbp7 (dbp7) from Schizosaccharomyces pombe (strain 972 / ATCC 24843) (Fission yeast).